Reading from the N-terminus, the 2293-residue chain is Protein Ycf2 B (2293 aa).

Position 1647–1654 (1647–1654 (GSIGTGRS)) interacts with ATP.

Belongs to the Ycf2 family.

Its subcellular location is the plastid. It localises to the chloroplast stroma. Functionally, probable ATPase of unknown function. Its presence in a non-photosynthetic plant (Epifagus virginiana) and experiments in tobacco indicate that it has an essential function which is probably not related to photosynthesis. This chain is Protein Ycf2 B, found in Crucihimalaya wallichii (Rock-cress).